A 361-amino-acid polypeptide reads, in one-letter code: Lipoyl synthase 1, chloroplastic (361 aa).

[4Fe-4S] cluster contacts are provided by Cys87, Cys92, Cys98, Cys124, Cys128, Cys131, and Ser339. One can recognise a Radical SAM core domain in the interval Gly107–Arg328.

It belongs to the radical SAM superfamily. Lipoyl synthase family. The cofactor is [4Fe-4S] cluster.

The protein localises to the plastid. The protein resides in the chloroplast. The enzyme catalyses [[Fe-S] cluster scaffold protein carrying a second [4Fe-4S](2+) cluster] + N(6)-octanoyl-L-lysyl-[protein] + 2 oxidized [2Fe-2S]-[ferredoxin] + 2 S-adenosyl-L-methionine + 4 H(+) = [[Fe-S] cluster scaffold protein] + N(6)-[(R)-dihydrolipoyl]-L-lysyl-[protein] + 4 Fe(3+) + 2 hydrogen sulfide + 2 5'-deoxyadenosine + 2 L-methionine + 2 reduced [2Fe-2S]-[ferredoxin]. It participates in protein modification; protein lipoylation via endogenous pathway; protein N(6)-(lipoyl)lysine from octanoyl-[acyl-carrier-protein]: step 2/2. Functionally, catalyzes the radical-mediated insertion of two sulfur atoms into the C-6 and C-8 positions of the octanoyl moiety bound to the lipoyl domains of lipoate-dependent enzymes, thereby converting the octanoylated domains into lipoylated derivatives. The protein is Lipoyl synthase 1, chloroplastic of Zea mays (Maize).